Consider the following 714-residue polypeptide: Hormonally up-regulated neu tumor-associated kinase (714 aa).

Over residues 1 to 15 (MPAAAGDGLLGEPAA) the composition is skewed to low complexity. The interval 1 to 26 (MPAAAGDGLLGEPAAPGGGGGAEDAA) is disordered. The region spanning 62–320 (LIGSRKLGEG…IQQALANRWL (259 aa)) is the Protein kinase domain. ATP-binding positions include 68–76 (LGEGSFAKV) and K91. D186 (proton acceptor) is an active-site residue. Basic and acidic residues predominate over residues 437–461 (KKPKEQEKRGDFLHRPFSKKLDKNL). Disordered regions lie at residues 437 to 471 (KKPKEQEKRGDFLHRPFSKKLDKNLPSHKQPSGSL), 518 to 552 (MEFIPVPPPRTPRIVKKPEPHQPGPGSTGIPHKED), and 590 to 660 (ARRN…VKSR). Residues 599 to 611 (LSPGLPSGSMSPL) show a composition bias toward low complexity. The span at 623 to 635 (AHEDKNSPPKEEG) shows a compositional bias: basic and acidic residues.

The protein belongs to the protein kinase superfamily. CAMK Ser/Thr protein kinase family. SNF1 subfamily.

The catalysed reaction is L-seryl-[protein] + ATP = O-phospho-L-seryl-[protein] + ADP + H(+). It catalyses the reaction L-threonyl-[protein] + ATP = O-phospho-L-threonyl-[protein] + ADP + H(+). The sequence is that of Hormonally up-regulated neu tumor-associated kinase (HUNK) from Pan troglodytes (Chimpanzee).